The primary structure comprises 341 residues: Anthranilate phosphoribosyltransferase (341 aa).

Residues Gly-79, 82–83 (GD), Thr-87, 89–92 (NIST), 107–115 (KHGNRAVSS), and Ser-119 contribute to the 5-phospho-alpha-D-ribose 1-diphosphate site. Gly-79 is a binding site for anthranilate. Residue Ser-91 coordinates Mg(2+). Anthranilate is bound at residue Asn-110. Arg-165 contributes to the anthranilate binding site. Positions 224 and 225 each coordinate Mg(2+).

It belongs to the anthranilate phosphoribosyltransferase family. Homodimer. Mg(2+) serves as cofactor.

It catalyses the reaction N-(5-phospho-beta-D-ribosyl)anthranilate + diphosphate = 5-phospho-alpha-D-ribose 1-diphosphate + anthranilate. Its pathway is amino-acid biosynthesis; L-tryptophan biosynthesis; L-tryptophan from chorismate: step 2/5. In terms of biological role, catalyzes the transfer of the phosphoribosyl group of 5-phosphorylribose-1-pyrophosphate (PRPP) to anthranilate to yield N-(5'-phosphoribosyl)-anthranilate (PRA). This is Anthranilate phosphoribosyltransferase from Bacillus cereus (strain AH820).